The primary structure comprises 151 residues: MRCPFCGEADTQVKDSRPTEDGAAIRRRRFCPQCSQRFTTIERVQLRELVVVKADQRRVAFDRDKLARSIRTALRKRPVDDERIERIVNGIVRKLEASGEAEIPSSEIGELVMDTLKEVDAVAYVRFASVYRDFREAKDFKAFLGTMDPSK.

The segment at 1 to 21 (MRCPFCGEADTQVKDSRPTED) is disordered. A zinc finger lies at 3–34 (CPFCGEADTQVKDSRPTEDGAAIRRRRFCPQC). The segment covering 11 to 21 (TQVKDSRPTED) has biased composition (basic and acidic residues). One can recognise an ATP-cone domain in the interval 49 to 139 (LVVVKADQRR…VYRDFREAKD (91 aa)).

The protein belongs to the NrdR family. Requires Zn(2+) as cofactor.

In terms of biological role, negatively regulates transcription of bacterial ribonucleotide reductase nrd genes and operons by binding to NrdR-boxes. This Acidiphilium cryptum (strain JF-5) protein is Transcriptional repressor NrdR.